Reading from the N-terminus, the 585-residue chain is Frizzled-5 (585 aa).

Positions Met1–Ala26 are cleaved as a signal peptide. Topologically, residues Ala27 to Trp238 are extracellular. The FZ domain maps to Ser28–Tyr150. Disulfide bonds link Cys33–Cys94, Cys41–Cys87, Cys78–Cys116, Cys105–Cys147, and Cys109–Cys133. N-linked (GlcNAc...) asparagine glycosylation is present at Asn47. Asn151 carries an N-linked (GlcNAc...) asparagine glycan. The interval Thr156–Gly179 is disordered. Pro residues predominate over residues Pro159–Ala175. A helical transmembrane segment spans residues Ile239–Ile259. Residues Asp260–Pro270 are Cytoplasmic-facing. A helical transmembrane segment spans residues Ile271–Val291. Topologically, residues Gly292–Cys315 are extracellular. A helical membrane pass occupies residues Thr316–Leu336. Residues Ser337 to Gln358 are Cytoplasmic-facing. The helical transmembrane segment at Tyr359–Ser379 threads the bilayer. Over Ser380–Gly402 the chain is Extracellular. A helical transmembrane segment spans residues Phe403–Phe423. The Cytoplasmic portion of the chain corresponds to Val424–Arg449. A helical transmembrane segment spans residues Ile450–Tyr470. Over Glu471 to Tyr500 the chain is Extracellular. The chain crosses the membrane as a helical span at residues Trp501–Ile521. The Cytoplasmic segment spans residues Trp522 to Val585. The short motif at Lys525 to Trp530 is the Lys-Thr-X-X-X-Trp motif, mediates interaction with the PDZ domain of Dvl family members element. A PDZ-binding motif is present at residues Ser583–Val585.

The protein belongs to the G-protein coupled receptor Fz/Smo family. In terms of assembly, binding of unsaturated fatty acid molecules (via FZ domain) promotes homodimerization. Interacts with WNT2B. Interacts with WNT3A. Interacts with WNT7A. Interacts with GOPC. Post-translationally, ubiquitinated by RNF43 and ZNRF3, leading to its degradation by the proteasome.

The protein resides in the cell membrane. The protein localises to the golgi apparatus membrane. It is found in the synapse. It localises to the perikaryon. Its subcellular location is the cell projection. The protein resides in the dendrite. The protein localises to the axon. Receptor for Wnt proteins. Functions in the canonical Wnt/beta-catenin signaling pathway. In vitro activates WNT2, WNT10B, WNT5A, but not WNT2B or WNT4 signaling. In neurons, activation by WNT7A promotes formation of synapses. May be involved in transduction and intercellular transmission of polarity information during tissue morphogenesis and/or in differentiated tissues. Plays a role in yolk sac angiogenesis and in placental vascularization. Plays a role in ocular development. The protein is Frizzled-5 (FZD5) of Homo sapiens (Human).